We begin with the raw amino-acid sequence, 386 residues long: EARP and GARP complex-interacting protein 1 (386 aa).

N-acetylmethionine is present on Met-1. WD repeat units follow at residues Gly-132 to Val-172, Arg-182 to Cys-222, Ala-226 to Lys-266, and Glu-270 to Phe-310. The disordered stretch occupies residues His-312–Glu-332. A Phosphoserine modification is found at Ser-320. The segment covering Pro-322–Glu-332 has biased composition (basic and acidic residues). Residues Glu-344 to Ile-384 form a WD 5 repeat.

This sequence belongs to the WD repeat EIPR1 family. As to quaternary structure, interacts with two multisubunit tethering complexes: EARP composed of VPS50, VPS51, VPS52 and VPS53 subunits and GARP complex composed of VPS51, VPS52, VPS53 and VPS54 subunits. Interacts with SNAP29. In terms of tissue distribution, ubiquitous. Highly expressed in brain, adipose tissue, spleen and kidney (at protein level).

The protein localises to the golgi apparatus. It localises to the trans-Golgi network. In terms of biological role, acts as a component of endosomal retrieval machinery that is involved in protein transport from early endosomes to either recycling endosomes or the trans-Golgi network. Mediates the recruitment of Golgi-associated retrograde protein (GARP) complex to the trans-Golgi network and controls early endosome-to-Golgi transport of internalized protein. Promotes the recycling of internalized transferrin receptor (TFRC) to the plasma membrane through interaction with endosome-associated recycling protein (EARP) complex. Controls proper insulin distribution and secretion, and retention of cargo in mature dense core vesicles. Required for the stability of the endosome-associated retrograde protein (EARP) complex subunits and for proper localization and association of EARP with membranes. The protein is EARP and GARP complex-interacting protein 1 of Rattus norvegicus (Rat).